The sequence spans 84 residues: Defensin-like protein 172 (84 aa).

Positions 1-23 (MAKASSTLVLSIIFLVMFALVEQ) are cleaved as a signal peptide. Disulfide bonds link C27–C74, C34–C56, C40–C68, and C44–C70.

This sequence belongs to the DEFL family.

It localises to the secreted. In Arabidopsis thaliana (Mouse-ear cress), this protein is Defensin-like protein 172 (LCR60).